Reading from the N-terminus, the 165-residue chain is Protein SprT (165 aa).

Residues 22-163 form the SprT-like domain; that stretch reads LAQANLKLDR…RCVHCGEPLV (142 aa). A Zn(2+)-binding site is contributed by His-78. Glu-79 is a catalytic residue. His-82 contributes to the Zn(2+) binding site.

It belongs to the SprT family. Requires Zn(2+) as cofactor.

It localises to the cytoplasm. In Salmonella paratyphi C (strain RKS4594), this protein is Protein SprT.